Reading from the N-terminus, the 159-residue chain is MRIGHGFDVHAFGGEGPIIIGGVRIPYEKGLLAHSDGDVALHALTDALLGAAALGDIGKLFPDTDPAFKGADSRELLREAWRRIQAKGYALGNVDVTIIAQAPKMLPHIPQMRVFIAEDLGCHMDDVNVKATTTEKLGFTGRGEGIACEAVALLIKATK.

Residues D8 and H10 each coordinate a divalent metal cation. 4-CDP-2-C-methyl-D-erythritol 2-phosphate-binding positions include 8-10 and 34-35; these read DVH and HS. A divalent metal cation is bound at residue H42. 4-CDP-2-C-methyl-D-erythritol 2-phosphate contacts are provided by residues 56–58, 61–65, 100–106, 132–135, F139, and R142; these read DIG, FPDTD, AQAPKML, and TTTE.

The protein belongs to the IspF family. Homotrimer. The cofactor is a divalent metal cation.

The catalysed reaction is 4-CDP-2-C-methyl-D-erythritol 2-phosphate = 2-C-methyl-D-erythritol 2,4-cyclic diphosphate + CMP. Its pathway is isoprenoid biosynthesis; isopentenyl diphosphate biosynthesis via DXP pathway; isopentenyl diphosphate from 1-deoxy-D-xylulose 5-phosphate: step 4/6. Its function is as follows. Involved in the biosynthesis of isopentenyl diphosphate (IPP) and dimethylallyl diphosphate (DMAPP), two major building blocks of isoprenoid compounds. Catalyzes the conversion of 4-diphosphocytidyl-2-C-methyl-D-erythritol 2-phosphate (CDP-ME2P) to 2-C-methyl-D-erythritol 2,4-cyclodiphosphate (ME-CPP) with a corresponding release of cytidine 5-monophosphate (CMP). The chain is 2-C-methyl-D-erythritol 2,4-cyclodiphosphate synthase from Escherichia coli O81 (strain ED1a).